The primary structure comprises 387 residues: Queuine tRNA-ribosyltransferase (387 aa).

The active-site Proton acceptor is D102. Substrate contacts are provided by residues 102–106, D156, Q205, and G232; that span reads DSGGF. Residues 263 to 269 are RNA binding; that stretch reads GVGTPED. Residue D282 is the Nucleophile of the active site. The segment at 287–291 is RNA binding; important for wobble base 34 recognition; the sequence is TRNAR. Positions 320, 322, 325, and 351 each coordinate Zn(2+).

It belongs to the queuine tRNA-ribosyltransferase family. In terms of assembly, homodimer. Within each dimer, one monomer is responsible for RNA recognition and catalysis, while the other monomer binds to the replacement base PreQ1. Zn(2+) serves as cofactor.

It carries out the reaction 7-aminomethyl-7-carbaguanine + guanosine(34) in tRNA = 7-aminomethyl-7-carbaguanosine(34) in tRNA + guanine. It functions in the pathway tRNA modification; tRNA-queuosine biosynthesis. Functionally, catalyzes the base-exchange of a guanine (G) residue with the queuine precursor 7-aminomethyl-7-deazaguanine (PreQ1) at position 34 (anticodon wobble position) in tRNAs with GU(N) anticodons (tRNA-Asp, -Asn, -His and -Tyr). Catalysis occurs through a double-displacement mechanism. The nucleophile active site attacks the C1' of nucleotide 34 to detach the guanine base from the RNA, forming a covalent enzyme-RNA intermediate. The proton acceptor active site deprotonates the incoming PreQ1, allowing a nucleophilic attack on the C1' of the ribose to form the product. After dissociation, two additional enzymatic reactions on the tRNA convert PreQ1 to queuine (Q), resulting in the hypermodified nucleoside queuosine (7-(((4,5-cis-dihydroxy-2-cyclopenten-1-yl)amino)methyl)-7-deazaguanosine). The sequence is that of Queuine tRNA-ribosyltransferase from Polaromonas naphthalenivorans (strain CJ2).